Here is a 128-residue protein sequence, read N- to C-terminus: MGKTLMALITAALLSTSSLVMAASVADDMETIAEHYGKVLKADSTAVIKQDLQAMRVAAVDAQKGIPTKLKSKVEDSPEMKDFRHGMDVLIGEIDGALALADQGKLDEAKQAAQDFKDTRNTYHKKYR.

The first 22 residues, 1–22 (MGKTLMALITAALLSTSSLVMA), serve as a signal peptide directing secretion. Residues methionine 29 and histidine 124 each coordinate heme b.

This sequence belongs to the cytochrome b562 family. The cofactor is heme b.

The protein resides in the periplasm. In terms of biological role, electron-transport protein of unknown function. This Yersinia pestis protein is Probable soluble cytochrome b562 2 (cybC2).